The chain runs to 805 residues: MTDRTQRELGWPEILNALAARCRLPAGRNRALALPFQPTAEAAREALALVGEARRLSELALALPLGGVGDVEGHLERASKGGVLEPLALRECAALARAAARTRGLLEARASETPRLWALAEPLSPSAALADRIERAIEPSGAISDRASAELAQARERSRGLHRALKAQVETLLADADMQRHLRDTYFTIRNERYVLPVLASARRAVPGIVHNASQSGQTLFVEPDSMVELGNELSIANAVAAEEEQRILRELTGALMADSGALARDLGILAALDVLEGSALLASDLDAHAPEVLSPFDGLRVGGAGAGFELLSLRHPLLVLQGKKVVPSHVRLDAPARALIVSGPNGGGKTVAITAVGLSALMLRAGLPVAAAEGSRLPFFLEVKAAVDERGDLAKDLSTFTAHLAAVKEMLAGAVPGSLILVDEIAADTDPREGAALAAAILESLVERGAAVLVTTHLDELKALALTDPRYANARVGFDAERLAPTYQLHLGSPGSSSAIEVAARVGLPAPLVERARAALTGHGGALGQALRALDDERARLAEERRAAESARDAARKAEERARAAEEVARRAQREAAARMGEALADELEAARAEVAELLAGLQARPTVKAATDAARQLDAWRATVAQAAKATQARADAGAEALPGGEVRPGVRVRIVSLGQEGEVVEVDGKDALVRAGPLKVRRPVADLVPLLGKAKDAAKLGRSRSEKLQAASEARPSAPPGLERRLDVRGLRVEELLREVERFLDRLYSDGEADCLILHGHGTGALKQALRDHLSASPYVGAFRAGDRHEGGDAVTVVSLRR.

ATP is bound at residue 344–351; sequence GPNGGGKT. The segment at 705-724 is disordered; sequence RSRSEKLQAASEARPSAPPG. The Smr domain occupies 729-804; that stretch reads LDVRGLRVEE…GDAVTVVSLR (76 aa).

Belongs to the DNA mismatch repair MutS family. MutS2 subfamily. In terms of assembly, homodimer. Binds to stalled ribosomes, contacting rRNA.

Functionally, endonuclease that is involved in the suppression of homologous recombination and thus may have a key role in the control of bacterial genetic diversity. In terms of biological role, acts as a ribosome collision sensor, splitting the ribosome into its 2 subunits. Detects stalled/collided 70S ribosomes which it binds and splits by an ATP-hydrolysis driven conformational change. Acts upstream of the ribosome quality control system (RQC), a ribosome-associated complex that mediates the extraction of incompletely synthesized nascent chains from stalled ribosomes and their subsequent degradation. Probably generates substrates for RQC. The protein is Endonuclease MutS2 of Anaeromyxobacter sp. (strain Fw109-5).